Reading from the N-terminus, the 752-residue chain is Photosystem I P700 chlorophyll a apoprotein A1 (752 aa).

Helical transmembrane passes span 73 to 96, 159 to 182, 198 to 222, 294 to 312, 349 to 372, 388 to 414, 436 to 458, and 533 to 551; these read IFSA…FHGA, LYWI…FHYH, MNHH…HIAL, IAHH…GHMY, WHAQ…HHMY, LSLF…IFMV, AIIS…LYIH, and FMVH…LILL. 2 residues coordinate [4Fe-4S] cluster: Cys-575 and Cys-584. The next 2 helical transmembrane spans lie at 591–612 and 666–688; these read HVFL…HFSW and SSAY…MFLF. His-677 lines the chlorophyll a' pocket. The chlorophyll a site is built by Met-685 and Tyr-693. Trp-694 provides a ligand contact to phylloquinone. The helical transmembrane segment at 726-746 threads the bilayer; sequence AVGLAHYLLGGIGTTWSFFLA.

The protein belongs to the PsaA/PsaB family. In terms of assembly, the PsaA/B heterodimer binds the P700 chlorophyll special pair and subsequent electron acceptors. PSI consists of a core antenna complex that captures photons, and an electron transfer chain that converts photonic excitation into a charge separation. The eukaryotic PSI reaction center is composed of at least 11 subunits. P700 is a chlorophyll a/chlorophyll a' dimer, A0 is one or more chlorophyll a, A1 is one or both phylloquinones and FX is a shared 4Fe-4S iron-sulfur center. is required as a cofactor.

The protein localises to the plastid. The protein resides in the chloroplast thylakoid membrane. The enzyme catalyses reduced [plastocyanin] + hnu + oxidized [2Fe-2S]-[ferredoxin] = oxidized [plastocyanin] + reduced [2Fe-2S]-[ferredoxin]. Its function is as follows. PsaA and PsaB bind P700, the primary electron donor of photosystem I (PSI), as well as the electron acceptors A0, A1 and FX. PSI is a plastocyanin/cytochrome c6-ferredoxin oxidoreductase, converting photonic excitation into a charge separation, which transfers an electron from the donor P700 chlorophyll pair to the spectroscopically characterized acceptors A0, A1, FX, FA and FB in turn. Oxidized P700 is reduced on the lumenal side of the thylakoid membrane by plastocyanin or cytochrome c6. The chain is Photosystem I P700 chlorophyll a apoprotein A1 from Trieres chinensis (Marine centric diatom).